A 331-amino-acid chain; its full sequence is 3-dehydroquinate synthase homolog (331 aa).

It belongs to the archaeal-type DHQ synthase family.

The polypeptide is 3-dehydroquinate synthase homolog (Aquifex aeolicus (strain VF5)).